We begin with the raw amino-acid sequence, 350 residues long: Biotin synthase (350 aa).

The Radical SAM core domain occupies 38–256 (NYVQVSTLLS…IAIARIMMPQ (219 aa)). The [4Fe-4S] cluster site is built by Cys-53, Cys-57, and Cys-60. Cys-97, Cys-128, Cys-188, and Arg-260 together coordinate [2Fe-2S] cluster.

The protein belongs to the radical SAM superfamily. Biotin synthase family. Homodimer. The cofactor is [4Fe-4S] cluster. [2Fe-2S] cluster is required as a cofactor.

It catalyses the reaction (4R,5S)-dethiobiotin + (sulfur carrier)-SH + 2 reduced [2Fe-2S]-[ferredoxin] + 2 S-adenosyl-L-methionine = (sulfur carrier)-H + biotin + 2 5'-deoxyadenosine + 2 L-methionine + 2 oxidized [2Fe-2S]-[ferredoxin]. Its pathway is cofactor biosynthesis; biotin biosynthesis; biotin from 7,8-diaminononanoate: step 2/2. In terms of biological role, catalyzes the conversion of dethiobiotin (DTB) to biotin by the insertion of a sulfur atom into dethiobiotin via a radical-based mechanism. The chain is Biotin synthase from Vibrio campbellii (strain ATCC BAA-1116).